The primary structure comprises 758 residues: 5-methyltetrahydropteroyltriglutamate--homocysteine methyltransferase (758 aa).

5-methyltetrahydropteroyltri-L-glutamate contacts are provided by residues 17–20 (RELK) and Lys-114. Residues 429-431 (IGS) and Glu-482 each bind L-homocysteine. Residues 429-431 (IGS) and Glu-482 contribute to the L-methionine site. 5-methyltetrahydropteroyltri-L-glutamate is bound by residues 513–514 (RC) and Trp-559. An L-homocysteine-binding site is contributed by Asp-597. Asp-597 contributes to the L-methionine binding site. Position 603 (Glu-603) interacts with 5-methyltetrahydropteroyltri-L-glutamate. 3 residues coordinate Zn(2+): His-639, Cys-641, and Glu-663. His-692 functions as the Proton donor in the catalytic mechanism. Zn(2+) is bound at residue Cys-724.

Belongs to the vitamin-B12 independent methionine synthase family. It depends on Zn(2+) as a cofactor.

The catalysed reaction is 5-methyltetrahydropteroyltri-L-glutamate + L-homocysteine = tetrahydropteroyltri-L-glutamate + L-methionine. The protein operates within amino-acid biosynthesis; L-methionine biosynthesis via de novo pathway; L-methionine from L-homocysteine (MetE route): step 1/1. Functionally, catalyzes the transfer of a methyl group from 5-methyltetrahydrofolate to homocysteine resulting in methionine formation. This chain is 5-methyltetrahydropteroyltriglutamate--homocysteine methyltransferase, found in Buchnera aphidicola subsp. Acyrthosiphon pisum (strain APS) (Acyrthosiphon pisum symbiotic bacterium).